A 131-amino-acid chain; its full sequence is Large ribosomal subunit protein bL17 (131 aa).

The protein belongs to the bacterial ribosomal protein bL17 family. Part of the 50S ribosomal subunit. Contacts protein L32.

The protein is Large ribosomal subunit protein bL17 of Burkholderia mallei (strain NCTC 10229).